A 246-amino-acid polypeptide reads, in one-letter code: Probable transcriptional regulatory protein AHA_1522 (246 aa).

This sequence belongs to the TACO1 family.

It is found in the cytoplasm. The chain is Probable transcriptional regulatory protein AHA_1522 from Aeromonas hydrophila subsp. hydrophila (strain ATCC 7966 / DSM 30187 / BCRC 13018 / CCUG 14551 / JCM 1027 / KCTC 2358 / NCIMB 9240 / NCTC 8049).